Consider the following 600-residue polypeptide: Proline--tRNA ligase (600 aa).

Belongs to the class-II aminoacyl-tRNA synthetase family. ProS type 1 subfamily. In terms of assembly, homodimer.

The protein resides in the cytoplasm. The catalysed reaction is tRNA(Pro) + L-proline + ATP = L-prolyl-tRNA(Pro) + AMP + diphosphate. Its function is as follows. Catalyzes the attachment of proline to tRNA(Pro) in a two-step reaction: proline is first activated by ATP to form Pro-AMP and then transferred to the acceptor end of tRNA(Pro). As ProRS can inadvertently accommodate and process non-cognate amino acids such as alanine and cysteine, to avoid such errors it has two additional distinct editing activities against alanine. One activity is designated as 'pretransfer' editing and involves the tRNA(Pro)-independent hydrolysis of activated Ala-AMP. The other activity is designated 'posttransfer' editing and involves deacylation of mischarged Ala-tRNA(Pro). The misacylated Cys-tRNA(Pro) is not edited by ProRS. The chain is Proline--tRNA ligase from Gloeothece citriformis (strain PCC 7424) (Cyanothece sp. (strain PCC 7424)).